The following is a 1823-amino-acid chain: WD repeat-containing protein DDB_G0292056 (1823 aa).

Positions 1 to 68 are disordered; sequence MTYNNNNNYL…IGNSSGGGGV (68 aa). The segment covering 16 to 61 has biased composition (low complexity); sequence TSTSTSTSTSTPTSTKTSPLNTSSSSNILKSNSRNPSPNNPTNIGN. WD repeat units lie at residues 138–177, 182–222, 228–267, 270–310, 312–354, and 360–405; these read QSKW…YPLL, SHQR…KAVK, SHIL…QELN, VHSA…PKST, ITSN…YSTP, and GHTD…KDLF. Disordered regions lie at residues 418–461, 530–562, 649–687, 714–778, 805–840, 883–940, 966–996, 1014–1058, and 1122–1186; these read PTTT…LLST, QPDD…NNNN, NITE…GFLK, IDIS…YRPG, ILTN…TNDQ, IPNN…SSTS, SSSS…NPPR, NNIT…NDNP, and QQLV…NGKS. Composition is skewed to low complexity over residues 419–432 and 440–461; these read TTTT…TTTT and LNES…LLST. Low complexity-rich tracts occupy residues 654–680 and 717–748; these read NNNN…NNNN and SQQQ…QQQQ. 2 stretches are compositionally biased toward polar residues: residues 749-768 and 827-840; these read FLTA…SPTS and MNAS…TNDQ. Composition is skewed to low complexity over residues 885 to 926, 966 to 993, 1014 to 1041, and 1127 to 1183; these read NNNK…SSNN, SSSS…KNIN, NNIT…NRLN, and SSSP…NNGN. One copy of the WD 7 repeat lies at 1207-1250; it reads ANSYILSGKPVEEICKYNSELAEKENRKDLVKLWNTLGMITDSK. Disordered stretches follow at residues 1264-1307, 1697-1725, and 1764-1823; these read SHFG…LHQS, QQQP…HTHN, and PQQE…MFSN. The segment covering 1282 to 1293 has biased composition (low complexity); that stretch reads STGIASSTGSNS. The segment covering 1710–1725 has biased composition (polar residues); that stretch reads MSGTSHYHQQQPHTHN.

The protein is WD repeat-containing protein DDB_G0292056 of Dictyostelium discoideum (Social amoeba).